Here is a 150-residue protein sequence, read N- to C-terminus: Macrodomain Ter protein (150 aa).

Belongs to the MatP family. As to quaternary structure, homodimer.

The protein localises to the cytoplasm. In terms of biological role, required for spatial organization of the terminus region of the chromosome (Ter macrodomain) during the cell cycle. Prevents early segregation of duplicated Ter macrodomains during cell division. Binds specifically to matS, which is a 13 bp signature motif repeated within the Ter macrodomain. The protein is Macrodomain Ter protein of Shigella dysenteriae serotype 1 (strain Sd197).